We begin with the raw amino-acid sequence, 184 residues long: MKIQDYTKEMVDEKSFIDMAHTLLEEKGTTMNLYDIIDEFKALGHYEDDEHLENRIVQFYTDLNTDGRFLNVGENNWGLRDWYSVDDIEEKIAPTIQKFDILDEDDEEDKNLKLLGEEEEEIDDQETAEADAEDDDEDLDDPQDEEEINDSDIVIEEDKDEMDEAEQLFEEEEDFNDDPDDDKI.

An HTH HARE-type domain is found at 14–82 (KSFIDMAHTL…GENNWGLRDW (69 aa)). The disordered stretch occupies residues 114-184 (LLGEEEEEID…FNDDPDDDKI (71 aa)). Residues 117-184 (EEEEEIDDQE…FNDDPDDDKI (68 aa)) show a composition bias toward acidic residues.

This sequence belongs to the RpoE family. As to quaternary structure, RNAP is composed of a core of 2 alpha, a beta and a beta' subunits. The core is associated with a delta subunit and one of several sigma factors.

Participates in both the initiation and recycling phases of transcription. In the presence of the delta subunit, RNAP displays an increased specificity of transcription, a decreased affinity for nucleic acids, and an increased efficiency of RNA synthesis because of enhanced recycling. In Staphylococcus carnosus (strain TM300), this protein is Probable DNA-directed RNA polymerase subunit delta.